The sequence spans 73 residues: Large ribosomal subunit protein bL31 (73 aa).

Cysteine 16, cysteine 18, cysteine 37, and cysteine 40 together coordinate Zn(2+).

It belongs to the bacterial ribosomal protein bL31 family. Type A subfamily. In terms of assembly, part of the 50S ribosomal subunit. Zn(2+) is required as a cofactor.

In terms of biological role, binds the 23S rRNA. The polypeptide is Large ribosomal subunit protein bL31 (Marinobacter nauticus (strain ATCC 700491 / DSM 11845 / VT8) (Marinobacter aquaeolei)).